We begin with the raw amino-acid sequence, 236 residues long: uncharacterized protein (236 aa).

Residues 1–29 (MNNEKNKQDRENLNRQDERKSSEIKSERK) are disordered.

This is an uncharacterized protein from Staphylococcus aureus.